Reading from the N-terminus, the 88-residue chain is Small ribosomal subunit protein bS16c (88 aa).

This sequence belongs to the bacterial ribosomal protein bS16 family.

It is found in the plastid. The protein localises to the chloroplast. This chain is Small ribosomal subunit protein bS16c, found in Lactuca sativa (Garden lettuce).